A 184-amino-acid chain; its full sequence is Large ribosomal subunit protein uL5 (184 aa).

It belongs to the universal ribosomal protein uL5 family. Component of the large ribosomal subunit. Interacts with Fmr1 to form the RNA-induced silencing complex (RISC), a ribonucleoprotein (RNP) complex involved in translation regulation, other components of the complex are RpL5, Rm62, AGO2 and Dcr-1.

It localises to the nucleus. Its subcellular location is the cytoplasm. In terms of biological role, component of the ribosome, a large ribonucleoprotein complex responsible for the synthesis of proteins in the cell. The small ribosomal subunit (SSU) binds messenger RNAs (mRNAs) and translates the encoded message by selecting cognate aminoacyl-transfer RNA (tRNA) molecules. The large subunit (LSU) contains the ribosomal catalytic site termed the peptidyl transferase center (PTC), which catalyzes the formation of peptide bonds, thereby polymerizing the amino acids delivered by tRNAs into a polypeptide chain. The nascent polypeptides leave the ribosome through a tunnel in the LSU and interact with protein factors that function in enzymatic processing, targeting, and the membrane insertion of nascent chains at the exit of the ribosomal tunnel. This is Large ribosomal subunit protein uL5 (RpL11) from Drosophila melanogaster (Fruit fly).